The chain runs to 40 residues: Antimicrobial peptide 1 (40 aa).

A Chitin-binding type-1 domain is found at 1–40 (AQCGAQGGGATCPGGLCCSQWGWCGSTPKYCGAGCQSNCK). Disulfide bonds link C3/C18, C12/C24, C17/C31, and C35/C39.

In terms of processing, not glycosylated.

Antimicrobial peptide active against plant pathogenic fungi and Gram-negative and -positive bacteria. In Fagopyrum esculentum (Common buckwheat), this protein is Antimicrobial peptide 1.